We begin with the raw amino-acid sequence, 314 residues long: uncharacterized protein (314 aa).

2 consecutive transmembrane segments (helical) span residues 23 to 43 and 98 to 118; these read LALG…MALF and MASG…GPLT. The segment covering 165–184 has biased composition (gly residues); sequence GLGSGAGGGDVGGGGAGGTT. Residues 165–314 form a disordered region; that stretch reads GLGSGAGGGD…APDEKTDAGE (150 aa). The segment covering 190–202 has biased composition (pro residues); it reads GPPPVPTSSPPTT. Composition is skewed to low complexity over residues 203 to 212 and 219 to 232; these read PAGAPTKSAT and ASPA…AGMP. The chain crosses the membrane as a helical span at residues 221–241; it reads PASAHMGAAGMPMVPPGAMGA. Residues 294–314 show a composition bias toward basic and acidic residues; that stretch reads LLPEHKDFGRIAPDEKTDAGE.

The protein localises to the cell membrane. This is an uncharacterized protein from Mycobacterium tuberculosis (strain ATCC 25618 / H37Rv).